The chain runs to 168 residues: Ribosome maturation factor RimM (168 aa).

The 74-residue stretch at 95 to 168 (KEGYYWSDLI…QIMVDWELDY (74 aa)) folds into the PRC barrel domain.

Belongs to the RimM family. As to quaternary structure, binds ribosomal protein uS19.

It localises to the cytoplasm. Its function is as follows. An accessory protein needed during the final step in the assembly of 30S ribosomal subunit, possibly for assembly of the head region. Essential for efficient processing of 16S rRNA. May be needed both before and after RbfA during the maturation of 16S rRNA. It has affinity for free ribosomal 30S subunits but not for 70S ribosomes. This Nitrosomonas eutropha (strain DSM 101675 / C91 / Nm57) protein is Ribosome maturation factor RimM.